Here is a 177-residue protein sequence, read N- to C-terminus: Large ribosomal subunit protein uL6 (177 aa).

This sequence belongs to the universal ribosomal protein uL6 family. In terms of assembly, part of the 50S ribosomal subunit.

In terms of biological role, this protein binds to the 23S rRNA, and is important in its secondary structure. It is located near the subunit interface in the base of the L7/L12 stalk, and near the tRNA binding site of the peptidyltransferase center. In Xanthobacter autotrophicus (strain ATCC BAA-1158 / Py2), this protein is Large ribosomal subunit protein uL6.